We begin with the raw amino-acid sequence, 119 residues long: Large ribosomal subunit protein uL18 (119 aa).

The protein belongs to the universal ribosomal protein uL18 family. In terms of assembly, part of the 50S ribosomal subunit; part of the 5S rRNA/L5/L18/L25 subcomplex. Contacts the 5S and 23S rRNAs.

In terms of biological role, this is one of the proteins that bind and probably mediate the attachment of the 5S RNA into the large ribosomal subunit, where it forms part of the central protuberance. This chain is Large ribosomal subunit protein uL18, found in Cupriavidus taiwanensis (strain DSM 17343 / BCRC 17206 / CCUG 44338 / CIP 107171 / LMG 19424 / R1) (Ralstonia taiwanensis (strain LMG 19424)).